A 171-amino-acid polypeptide reads, in one-letter code: CASP-like protein 5A2 (171 aa).

At Met1–Gln39 the chain is on the cytoplasmic side. Residues Phe40 to Thr60 form a helical membrane-spanning segment. Ala61 is a topological domain (extracellular). Residues Phe62–Ile82 form a helical membrane-spanning segment. The Cytoplasmic segment spans residues Glu83–Asp106. The chain crosses the membrane as a helical span at residues Trp107–Val127. At Gly128–Gly148 the chain is on the extracellular side. Residues Met149 to Ala169 form a helical membrane-spanning segment. Residues Thr170–Arg171 are Cytoplasmic-facing.

It belongs to the Casparian strip membrane proteins (CASP) family. As to quaternary structure, homodimer and heterodimers.

The protein resides in the cell membrane. This is CASP-like protein 5A2 from Pteridium aquilinum subsp. aquilinum (Bracken fern).